The chain runs to 169 residues: Putative ribonuclease VapC50 (169 aa).

Functionally, toxic component of a type II toxin-antitoxin (TA) system. An RNase. The cognate antitoxin is VapB50. This Mycobacterium tuberculosis (strain ATCC 25618 / H37Rv) protein is Putative ribonuclease VapC50.